The primary structure comprises 184 residues: ATP-dependent protease subunit HslV (184 aa).

Threonine 8 is a catalytic residue. Na(+) contacts are provided by glycine 165, aspartate 168, and threonine 171.

It belongs to the peptidase T1B family. HslV subfamily. A double ring-shaped homohexamer of HslV is capped on each side by a ring-shaped HslU homohexamer. The assembly of the HslU/HslV complex is dependent on binding of ATP.

The protein localises to the cytoplasm. It catalyses the reaction ATP-dependent cleavage of peptide bonds with broad specificity.. With respect to regulation, allosterically activated by HslU binding. Functionally, protease subunit of a proteasome-like degradation complex believed to be a general protein degrading machinery. The chain is ATP-dependent protease subunit HslV from Pediococcus pentosaceus (strain ATCC 25745 / CCUG 21536 / LMG 10740 / 183-1w).